A 292-amino-acid chain; its full sequence is 4-hydroxy-tetrahydrodipicolinate synthase (292 aa).

Residue Thr46 coordinates pyruvate. The Proton donor/acceptor role is filled by Tyr134. Lys162 functions as the Schiff-base intermediate with substrate in the catalytic mechanism. Residue Ile204 coordinates pyruvate.

The protein belongs to the DapA family. In terms of assembly, homotetramer; dimer of dimers.

The protein localises to the cytoplasm. It carries out the reaction L-aspartate 4-semialdehyde + pyruvate = (2S,4S)-4-hydroxy-2,3,4,5-tetrahydrodipicolinate + H2O + H(+). It functions in the pathway amino-acid biosynthesis; L-lysine biosynthesis via DAP pathway; (S)-tetrahydrodipicolinate from L-aspartate: step 3/4. Functionally, catalyzes the condensation of (S)-aspartate-beta-semialdehyde [(S)-ASA] and pyruvate to 4-hydroxy-tetrahydrodipicolinate (HTPA). In Moorella thermoacetica (strain ATCC 39073 / JCM 9320), this protein is 4-hydroxy-tetrahydrodipicolinate synthase.